A 371-amino-acid polypeptide reads, in one-letter code: Cytochrome b (371 aa).

Helical transmembrane passes span 25–45, 69–90, 105–125, and 170–190; these read FGSM…FLAV, WMVQ…YIHI, WLSG…GYVL, and FFAL…LHVL. Residues H75 and H89 each coordinate heme b. Heme b-binding residues include H174 and H188. H193 contacts a ubiquinone. 4 consecutive transmembrane segments (helical) span residues 218–238, 280–300, 312–332, and 339–358; these read MKDL…ISFF, LGGA…PFIH, LMQL…WAAT, and FISI…ISNP.

This sequence belongs to the cytochrome b family. In terms of assembly, the cytochrome bc1 complex contains 3 respiratory subunits (MT-CYB, CYC1 and UQCRFS1), 2 core proteins (UQCRC1 and UQCRC2) and probably 6 low-molecular weight proteins. Requires heme b as cofactor.

The protein resides in the mitochondrion inner membrane. Component of the ubiquinol-cytochrome c reductase complex (complex III or cytochrome b-c1 complex) that is part of the mitochondrial respiratory chain. The b-c1 complex mediates electron transfer from ubiquinol to cytochrome c. Contributes to the generation of a proton gradient across the mitochondrial membrane that is then used for ATP synthesis. In Boa constrictor (Boa), this protein is Cytochrome b (MT-CYB).